A 330-amino-acid polypeptide reads, in one-letter code: Aspartate--ammonia ligase (330 aa).

The protein belongs to the class-II aminoacyl-tRNA synthetase family. AsnA subfamily.

The protein resides in the cytoplasm. It carries out the reaction L-aspartate + NH4(+) + ATP = L-asparagine + AMP + diphosphate + H(+). It functions in the pathway amino-acid biosynthesis; L-asparagine biosynthesis; L-asparagine from L-aspartate (ammonia route): step 1/1. This is Aspartate--ammonia ligase from Streptococcus pyogenes serotype M3 (strain ATCC BAA-595 / MGAS315).